We begin with the raw amino-acid sequence, 419 residues long: Tyrosine--tRNA ligase 2 (419 aa).

Tyrosine 34 contacts L-tyrosine. Residues 39 to 48 (PTGDSMHIGH) carry the 'HIGH' region motif. Tyrosine 168 and glutamine 172 together coordinate L-tyrosine. The 'KMSKS' region motif lies at 230–234 (KFGKS). Residue lysine 233 participates in ATP binding. One can recognise an S4 RNA-binding domain in the interval 352-418 (KNIVEWLVDL…GKKNYSLVKL (67 aa)).

This sequence belongs to the class-I aminoacyl-tRNA synthetase family. TyrS type 1 subfamily. In terms of assembly, homodimer.

The protein localises to the cytoplasm. It carries out the reaction tRNA(Tyr) + L-tyrosine + ATP = L-tyrosyl-tRNA(Tyr) + AMP + diphosphate + H(+). In terms of biological role, catalyzes the attachment of tyrosine to tRNA(Tyr) in a two-step reaction: tyrosine is first activated by ATP to form Tyr-AMP and then transferred to the acceptor end of tRNA(Tyr). The protein is Tyrosine--tRNA ligase 2 of Bacillus cereus (strain ZK / E33L).